Reading from the N-terminus, the 178-residue chain is Small ribosomal subunit protein bS16 (178 aa).

Residues 78-178 (KLGITQWTAG…AAPAEGEEQA (101 aa)) are disordered. Residues 91–113 (KKGEPGQKAKERAEERAQREADR) are compositionally biased toward basic and acidic residues. The span at 114-127 (AAAAAEAAAAPAEE) shows a compositional bias: low complexity. Acidic residues predominate over residues 128–139 (APAEEAPAEEAA). Residues 140–172 (AEAAPEAAAAEEAPAAEAAAEEAAPAAEEAAPA) are compositionally biased toward low complexity.

It belongs to the bacterial ribosomal protein bS16 family.

The sequence is that of Small ribosomal subunit protein bS16 from Phenylobacterium zucineum (strain HLK1).